The chain runs to 453 residues: MSQSPKVGFVSLGCPKALVDSEQIITQLRAEGYEISGTYDGADLVVVNTCGFIDEAVQESLDAIGEALTENGKVIVTGCLGAKSSASGSNLIEEVHPKVLAVTGPHAVGEVMQAVHSHLPKPHDPFVDLVPAAGIKLTPRHYAYLKISEGCNHRCTFCIIPSMRGDLVSRPVAEVMLEAENLFKSGVKELLVISQDTSAYGVDVKYRTGFWNGKPIKTRMTDLVAALGELAAQYGAWVRLHYVYPYPSVDEVIPLMAEGPFKGHVLPYLDVPFQHAHPDVLKRMKRPANAEKVLERVQKWREICPDLTIRSTFIAGFPGETEAQFETLLDFIREAELDRVGCFAYSPVEGATANELDGALPDDVREERRARFMEVAEEVSARRMQRKVGKTLKVLIDEVGNEGGIGRTAADAPEIDGVVYVEPAAKASKRYKVGDFVSVKITGADGHDLWGEV.

An MTTase N-terminal domain is found at 5–120; that stretch reads PKVGFVSLGC…VMQAVHSHLP (116 aa). [4Fe-4S] cluster is bound by residues cysteine 14, cysteine 50, cysteine 79, cysteine 151, cysteine 155, and cysteine 158. One can recognise a Radical SAM core domain in the interval 137-382; the sequence is LTPRHYAYLK…MEVAEEVSAR (246 aa). Residues 385-453 enclose the TRAM domain; sequence QRKVGKTLKV…ADGHDLWGEV (69 aa).

The protein belongs to the methylthiotransferase family. RimO subfamily. The cofactor is [4Fe-4S] cluster.

The protein localises to the cytoplasm. The enzyme catalyses L-aspartate(89)-[ribosomal protein uS12]-hydrogen + (sulfur carrier)-SH + AH2 + 2 S-adenosyl-L-methionine = 3-methylsulfanyl-L-aspartate(89)-[ribosomal protein uS12]-hydrogen + (sulfur carrier)-H + 5'-deoxyadenosine + L-methionine + A + S-adenosyl-L-homocysteine + 2 H(+). Catalyzes the methylthiolation of an aspartic acid residue of ribosomal protein uS12. This chain is Ribosomal protein uS12 methylthiotransferase RimO, found in Burkholderia vietnamiensis (strain G4 / LMG 22486) (Burkholderia cepacia (strain R1808)).